The chain runs to 638 residues: Chaperone protein DnaK (638 aa).

Position 199 is a phosphothreonine; by autocatalysis (Thr199). A disordered region spans residues 600 to 638 (EINQKKSEENLKKEDTSSESKKDENVVDAEFEEIKDPKK). Positions 602–624 (NQKKSEENLKKEDTSSESKKDEN) are enriched in basic and acidic residues.

It belongs to the heat shock protein 70 family.

In terms of biological role, acts as a chaperone. The sequence is that of Chaperone protein DnaK from Buchnera aphidicola subsp. Schizaphis graminum (strain Sg).